The chain runs to 525 residues: GMP synthase [glutamine-hydrolyzing] (525 aa).

The region spanning 9–207 (RILILDFGSQ…VMDICKCEKL (199 aa)) is the Glutamine amidotransferase type-1 domain. C86 functions as the Nucleophile in the catalytic mechanism. Residues H181 and E183 contribute to the active site. The GMPS ATP-PPase domain occupies 208 to 400 (WTAGAIIEDA…LGLPYDMLYR (193 aa)). Residue 235–241 (SGGVDSS) coordinates ATP.

Homodimer.

The catalysed reaction is XMP + L-glutamine + ATP + H2O = GMP + L-glutamate + AMP + diphosphate + 2 H(+). It participates in purine metabolism; GMP biosynthesis; GMP from XMP (L-Gln route): step 1/1. Its function is as follows. Catalyzes the synthesis of GMP from XMP. In Alteromonas mediterranea (strain DSM 17117 / CIP 110805 / LMG 28347 / Deep ecotype), this protein is GMP synthase [glutamine-hydrolyzing].